The chain runs to 745 residues: uncharacterized protein (745 aa).

Residues 158 to 256 (NQVCDYIELH…HQTPKQYRGD (99 aa)) enclose the HTH araC/xylS-type domain. DNA-binding regions (H-T-H motif) lie at residues 175-196 (SELSEYVGWSESHLSKKFTESL) and 223-246 (ITDIALQNGFSSAASFARTFKHFT).

This is an uncharacterized protein from Staphylococcus aureus (strain Mu50 / ATCC 700699).